The following is a 310-amino-acid chain: 4-hydroxyproline 2-epimerase (310 aa).

The active-site Proton acceptor is Cys-88. Substrate-binding positions include 89–90 (GH), His-208, and Asp-232. Cys-236 serves as the catalytic Proton donor. 237-238 (GT) is a substrate binding site.

The protein belongs to the proline racemase family.

It carries out the reaction trans-4-hydroxy-L-proline = cis-4-hydroxy-D-proline. Its function is as follows. Catalyzes the epimerization of trans-4-hydroxy-L-proline (t4LHyp) to cis-4-hydroxy-D-proline (c4DHyp). Is likely involved in a degradation pathway that converts t4LHyp to alpha-ketoglutarate. Displays no proline racemase activity. The polypeptide is 4-hydroxyproline 2-epimerase (Burkholderia cenocepacia (strain ATCC BAA-245 / DSM 16553 / LMG 16656 / NCTC 13227 / J2315 / CF5610) (Burkholderia cepacia (strain J2315))).